A 298-amino-acid polypeptide reads, in one-letter code: Bifunctional protein FolD (298 aa).

NADP(+)-binding positions include 166 to 168, Ser-195, and Ile-236; that span reads GRS.

The protein belongs to the tetrahydrofolate dehydrogenase/cyclohydrolase family. As to quaternary structure, homodimer.

The enzyme catalyses (6R)-5,10-methylene-5,6,7,8-tetrahydrofolate + NADP(+) = (6R)-5,10-methenyltetrahydrofolate + NADPH. It carries out the reaction (6R)-5,10-methenyltetrahydrofolate + H2O = (6R)-10-formyltetrahydrofolate + H(+). It participates in one-carbon metabolism; tetrahydrofolate interconversion. Its function is as follows. Catalyzes the oxidation of 5,10-methylenetetrahydrofolate to 5,10-methenyltetrahydrofolate and then the hydrolysis of 5,10-methenyltetrahydrofolate to 10-formyltetrahydrofolate. The protein is Bifunctional protein FolD of Chlorobium phaeobacteroides (strain BS1).